We begin with the raw amino-acid sequence, 389 residues long: MEDSPTMVRVDSPTMVRGENQVSPCQGRRCFPKALGYVTGDMKELANQLKDKPVVLQFIDWILRGISQVVFVNNPVSGILILVGLLVQNPWWALTGWLGTVVSTLMALLLSQDRSLIASGLYGYNATLVGVLMAVFSDKGDYFWWLLLPVCAMSMTCPIFSSALNSMLSKWDLPVFTLPFNMALSMYLSATGHYNPFFPAKLVIPITTAPNISWSDLSALELLKSIPVGVGQIYGCDNPWTGGIFLGAILLSSPLMCLHAAIGSLLGIAAGLSLSAPFEDIYFGLWGFNSSLACIAMGGMFMALTWQTHLLALGCALFTAYLGVGMANFMAEVGLPACTWPFCLATLLFLIMTTKNSNIYKMPLSKVTYPEENRIFYLQAKKRMVESPL.

A run of 5 helical transmembrane segments spans residues 53–73, 91–110, 116–136, 143–163, and 173–193; these read PVVLQFIDWILRGISQVVFVN, WWALTGWLGTVVSTLMALLL, LIASGLYGYNATLVGVLMAVF, FWWLLLPVCAMSMTCPIFSSA, and LPVFTLPFNMALSMYLSATGH. A glycan (N-linked (GlcNAc...) asparagine) is linked at asparagine 211. Transmembrane regions (helical) follow at residues 242–262, 281–301, 310–330, and 333–353; these read GGIFLGAILLSSPLMCLHAAI, IYFGLWGFNSSLACIAMGGMF, LLALGCALFTAYLGVGMANFM, and VGLPACTWPFCLATLLFLIMT.

It belongs to the urea transporter family. In terms of assembly, homotrimer; each subunit contains a pore through which urea permeates. Identified in a complex with STOM. Detected in erythrocytes (at protein level). Expressed in spleen erythroblasts and tumoral kidney.

It is found in the cell membrane. Its subcellular location is the basolateral cell membrane. It carries out the reaction urea(in) = urea(out). Its activity is regulated as follows. Inhibited by phloretin and para-chloromercuribenzene sulfonate. Functionally, mediates the transport of urea driven by a concentration gradient across the cell membrane of erythrocytes. Also mediates the transport of urea across the cell membrane of the renal inner medullary collecting duct which is critical to the urinary concentrating mechanism. Facilitates water transport in erythrocytes. The protein is Urea transporter 1 (SLC14A1) of Homo sapiens (Human).